The primary structure comprises 204 residues: Probable carboxysome shell protein CsoS1E (204 aa).

Composition is skewed to low complexity over residues 1 to 14 (MPKP…DSPS), 41 to 84 (SAST…AAGS), and 92 to 102 (GGAIKPPASSS). Residues 1–102 (MPKPSSSSSS…GAIKPPASSS (102 aa)) form a disordered region. Positions 111–196 (ALGMIETRGM…PHQEVEPALR (86 aa)) constitute a BMC domain.

It belongs to the bacterial microcompartments protein family. Homohexamer.

It localises to the carboxysome. Its function is as follows. A probable carboxysomal shell protein found only in Prochlorococcus and Synechococcus strains that grow in low light. This is Probable carboxysome shell protein CsoS1E from Prochlorococcus marinus (strain MIT 9313).